Consider the following 119-residue polypeptide: Small ribosomal subunit protein uS13m (119 aa).

Belongs to the universal ribosomal protein uS13 family. Part of the small ribosomal subunit.

The protein resides in the mitochondrion. Functionally, located at the top of the head of the small subunit, it contacts several helices of the small subunit rRNA. The protein is Small ribosomal subunit protein uS13m (RPS13) of Acanthamoeba castellanii (Amoeba).